The primary structure comprises 150 residues: Cytochrome c oxidase subunit 5A, mitochondrial (150 aa).

A mitochondrion-targeting transit peptide spans 1 to 41 (MLGAALRRCAVAATAWAGPRGLLHSAPTPGPAAAIHSVRCY). The SIFI-degron motif lies at 2–17 (LGAALRRCAVAATAWA). N6-acetyllysine occurs at positions 87 and 113. Thr141 carries the post-translational modification Phosphothreonine.

Belongs to the cytochrome c oxidase subunit 5A family. In terms of assembly, component of the cytochrome c oxidase (complex IV, CIV), a multisubunit enzyme composed of 14 subunits. The complex is composed of a catalytic core of 3 subunits MT-CO1, MT-CO2 and MT-CO3, encoded in the mitochondrial DNA, and 11 supernumerary subunits COX4I, COX5A, COX5B, COX6A, COX6B, COX6C, COX7A, COX7B, COX7C, COX8 and NDUFA4, which are encoded in the nuclear genome. The complex exists as a monomer or a dimer and forms supercomplexes (SCs) in the inner mitochondrial membrane with NADH-ubiquinone oxidoreductase (complex I, CI) and ubiquinol-cytochrome c oxidoreductase (cytochrome b-c1 complex, complex III, CIII), resulting in different assemblies (supercomplex SCI(1)III(2)IV(1) and megacomplex MCI(2)III(2)IV(2)). Interacts with AFG1L. Interacts with RAB5IF. Post-translationally, in response to mitochondrial stress, the precursor protein is ubiquitinated by the SIFI complex in the cytoplasm before mitochondrial import, leading to its degradation. Within the SIFI complex, UBR4 initiates ubiquitin chain that are further elongated or branched by KCMF1.

The protein localises to the mitochondrion inner membrane. The protein operates within energy metabolism; oxidative phosphorylation. In terms of biological role, component of the cytochrome c oxidase, the last enzyme in the mitochondrial electron transport chain which drives oxidative phosphorylation. The respiratory chain contains 3 multisubunit complexes succinate dehydrogenase (complex II, CII), ubiquinol-cytochrome c oxidoreductase (cytochrome b-c1 complex, complex III, CIII) and cytochrome c oxidase (complex IV, CIV), that cooperate to transfer electrons derived from NADH and succinate to molecular oxygen, creating an electrochemical gradient over the inner membrane that drives transmembrane transport and the ATP synthase. Cytochrome c oxidase is the component of the respiratory chain that catalyzes the reduction of oxygen to water. Electrons originating from reduced cytochrome c in the intermembrane space (IMS) are transferred via the dinuclear copper A center (CU(A)) of subunit 2 and heme A of subunit 1 to the active site in subunit 1, a binuclear center (BNC) formed by heme A3 and copper B (CU(B)). The BNC reduces molecular oxygen to 2 water molecules using 4 electrons from cytochrome c in the IMS and 4 protons from the mitochondrial matrix. This Saimiri sciureus (Common squirrel monkey) protein is Cytochrome c oxidase subunit 5A, mitochondrial (COX5A).